A 936-amino-acid chain; its full sequence is Myocardin-related transcription factor A (936 aa).

RPEL repeat units follow at residues 15–40, 59–84, and 103–128; these read TVLQ…PPLK, DYLK…EETS, and DDLN…PVET. The Bipartite Nuclear localization signal motif lies at 62–100; that stretch reads KRKIRSRPERAELVRMHILEETSAEPSLQAKQIKLKRAR. Disordered regions lie at residues 146 to 185, 234 to 258, and 401 to 422; these read SSFD…TQIP, SQPK…KVKK, and SQDP…QAKP. Residues 160-170 are compositionally biased toward polar residues; the sequence is QPASQESQGSI. Basic and acidic residues predominate over residues 239 to 254; that stretch reads SFEKSQRIKKPKEPKP. Positions 368–402 constitute an SAP domain; sequence LDEMKVAELKLELKHRGLPVSGTKIDLIERLKASQ. A compositionally biased stretch (low complexity) spans 404–416; it reads PSTATAASAKPTP. The stretch at 497 to 542 forms a coiled coil; it reads DARDKDLMLREKDRQIEELTQRLKQKQELVERLRQQLEQEKRTPQH. The disordered stretch occupies residues 707–755; it reads HNESPATPPQQPEPEPPPHSIFLTHSSPQWSKNPPGYDEAMKQQPNSCE. Pro residues predominate over residues 712–725; the sequence is ATPPQQPEPEPPPH. Over residues 729 to 738 the composition is skewed to polar residues; the sequence is LTHSSPQWSK.

As to quaternary structure, interacts with srf, forming the srf-mrtfa nuclear complex which binds the 5'-CArG-3' consensus motif (CArG box) on DNA via srf. Interacts (via RPEL repeats) with globular actin (G-actin), thereby regulating its subcellular location and activity of the complex formed with srf.

Its subcellular location is the cytoplasm. It is found in the nucleus. In terms of biological role, transcription coactivator that associates with the serum response factor (srf) transcription factor to control expression of genes regulating the cytoskeleton during development, morphogenesis and cell migration. The srf-mrtfa complex activity responds to Rho GTPase-induced changes in cellular globular actin (G-actin) concentration, thereby coupling cytoskeletal gene expression to cytoskeletal dynamics. Mrtfa binds G-actin via its RPEL repeats, regulating activity of the mrtfa-srf complex. Activity is also regulated by filamentous actin (F-actin) in the nucleus. The polypeptide is Myocardin-related transcription factor A (mrtfa) (Xenopus laevis (African clawed frog)).